Here is a 75-residue protein sequence, read N- to C-terminus: Cytochrome c oxidase subunit 6C (75 aa).

At 1-13 (MAPEVLPKPQMRG) the chain is on the mitochondrial matrix side. Residues 14–54 (LLAKRLRFHMVTAFVLSLGVAALYKFRVADKRKKAYADFYR) form a helical membrane-spanning segment. Topologically, residues 55–75 (NYDAMKDFEEMRKAGIFQSVK) are mitochondrial intermembrane.

This sequence belongs to the cytochrome c oxidase subunit 6c family. Component of the cytochrome c oxidase (complex IV, CIV), a multisubunit enzyme composed of 14 subunits. The complex is composed of a catalytic core of 3 subunits MT-CO1, MT-CO2 and MT-CO3, encoded in the mitochondrial DNA, and 11 supernumerary subunits COX4I, COX5A, COX5B, COX6A, COX6B, COX6C, COX7A, COX7B, COX7C, COX8 and NDUFA4, which are encoded in the nuclear genome. The complex exists as a monomer or a dimer and forms supercomplexes (SCs) in the inner mitochondrial membrane with NADH-ubiquinone oxidoreductase (complex I, CI) and ubiquinol-cytochrome c oxidoreductase (cytochrome b-c1 complex, complex III, CIII), resulting in different assemblies (supercomplex SCI(1)III(2)IV(1) and megacomplex MCI(2)III(2)IV(2)).

It localises to the mitochondrion inner membrane. It functions in the pathway energy metabolism; oxidative phosphorylation. Functionally, component of the cytochrome c oxidase, the last enzyme in the mitochondrial electron transport chain which drives oxidative phosphorylation. The respiratory chain contains 3 multisubunit complexes succinate dehydrogenase (complex II, CII), ubiquinol-cytochrome c oxidoreductase (cytochrome b-c1 complex, complex III, CIII) and cytochrome c oxidase (complex IV, CIV), that cooperate to transfer electrons derived from NADH and succinate to molecular oxygen, creating an electrochemical gradient over the inner membrane that drives transmembrane transport and the ATP synthase. Cytochrome c oxidase is the component of the respiratory chain that catalyzes the reduction of oxygen to water. Electrons originating from reduced cytochrome c in the intermembrane space (IMS) are transferred via the dinuclear copper A center (CU(A)) of subunit 2 and heme A of subunit 1 to the active site in subunit 1, a binuclear center (BNC) formed by heme A3 and copper B (CU(B)). The BNC reduces molecular oxygen to 2 water molecules using 4 electrons from cytochrome c in the IMS and 4 protons from the mitochondrial matrix. This is Cytochrome c oxidase subunit 6C (COX6C) from Trachypithecus cristatus (Silvered leaf-monkey).